A 2227-amino-acid chain; its full sequence is Genome polyprotein (2227 aa).

2 consecutive short sequence motifs ((L)YPX(n)L motif) follow at residues Y167–L171 and Y200–L205. Residues M766–Q836 form an involved in P1-2A pentamerization region. A helical membrane pass occupies residues T1011–I1031. Residues I1043–E1070 form a membrane-penetrating ability region. The region spanning H1204–M1366 is the SF3 helicase domain. An ATP-binding site is contributed by G1230 to S1237. Residues W1462–Y1482 form a helical membrane-spanning segment. Y1499 carries the O-(5'-phospho-RNA)-tyrosine modification. The Peptidase C3 domain occupies D1514–F1728. Catalysis depends on for protease 3C activity residues H1563, D1603, and C1691. A RdRp catalytic domain is found at D1976–N2097.

Belongs to the picornaviridae polyprotein family. Homodimer. Homomultimer; probably interacts with membranes in a multimeric form. Seems to assemble into amyloid-like fibers. As to quaternary structure, interacts with host ACBD3. In terms of assembly, homodimer. Monomer. Interacts with protein 3CD. Interacts with protein 3AB. As to quaternary structure, interacts with human MAVS. In terms of assembly, homodimer; disulfide-linked. Homopentamer. Homooligomer. As to quaternary structure, interacts with capsid protein VP2. Interacts with capsid protein VP3. In terms of assembly, interacts with capsid protein VP1. Interacts with capsid protein VP3. Interacts with capsid protein VP1. Interacts with capsid protein VP2. In terms of processing, specific enzymatic cleavages by viral protease in vivo yield a variety of precursors and mature proteins. Polyprotein processing intermediates are produced, such as P1-2A which is a functional precursor of the structural proteins, VP0 which is a VP4-VP2 precursor, VP1-2A precursor, 3ABC precursor which is a stable and catalytically active precursor of 3A, 3B and 3C proteins, 3AB and 3CD precursors. The assembly signal 2A is removed from VP1-2A by a host protease, possibly host Cathepsin L. This cleavage occurs over a region of 3 amino-acids probably generating VP1 proteins with heterogeneous C-termini. During virion maturation, immature virions are rendered infectious following cleavage of VP0 into VP4 and VP2. This maturation seems to be an autocatalytic event triggered by the presence of RNA in the capsid and is followed by a conformational change of the particle. Post-translationally, the assembly signal 2A is removed from VP1-2A by a host protease, possibly host Cathepsin L in naked virions. This cleavage does not occur in enveloped virions. This cleavage occurs over a region of 3 amino-acids probably generating VP1 proteins with heterogeneous C-termini. In terms of processing, VPg is uridylylated prior to priming replication into VPg-pUpU. Unlike other picornaviruses, does not seem to be myristoylated.

It is found in the virion. The protein resides in the host endosome. The protein localises to the host multivesicular body. It localises to the host membrane. Its subcellular location is the host mitochondrion outer membrane. It is found in the host cytoplasm. The protein resides in the host cytoplasmic vesicle membrane. The catalysed reaction is RNA(n) + a ribonucleoside 5'-triphosphate = RNA(n+1) + diphosphate. It catalyses the reaction a ribonucleoside 5'-triphosphate + H2O = a ribonucleoside 5'-diphosphate + phosphate + H(+). It carries out the reaction Selective cleavage of Gln-|-Gly bond in the poliovirus polyprotein. In other picornavirus reactions Glu may be substituted for Gln, and Ser or Thr for Gly.. Its function is as follows. Capsid proteins VP1, VP2, and VP3 form a closed capsid enclosing the viral positive strand RNA genome. All these proteins contain a beta-sheet structure called beta-barrel jelly roll. Together they form an icosahedral capsid (T=3) composed of 60 copies of each VP1, VP2, and VP3, with a diameter of approximately 300 Angstroms. VP1 is situated at the 12 fivefold axes, whereas VP2 and VP3 are located at the quasi-sixfold axes. The naked capsid interacts with the host receptor HAVCR1 to provide virion attachment to and probably entry into the target cell. VP0 precursor is a component of the immature procapsids. In terms of biological role, plays a role in the assembly of the 12 pentamers into an icosahedral structure. Has not been detected in mature virions, supposedly owing to its small size. Functionally, precursor component of immature procapsids that corresponds to an extended form of the structural protein VP1. After maturation, possibly by the host Cathepsin L, the assembly signal 2A is cleaved to give rise to the mature VP1 protein. Its function is as follows. Functions as a viroporin. Affects membrane integrity and causes an increase in membrane permeability. Involved in host intracellular membrane rearrangements probably to give rise to the viral factories. Does not disrupt calcium homeostasis or glycoprotein trafficking. Antagonizes the innate immune response of the host by suppressing IFN-beta synthesis, which it achieves by interfering with the RIG-I/IFIH1 pathway. Affects membrane integrity and causes an increase in membrane permeability. In terms of biological role, associates with and induces structural rearrangements of intracellular membranes. Displays RNA-binding activity. Functionally, the precursor 3ABC is targeted to the mitochondrial membrane where protease 3C activity cleaves and inhibits the host antiviral protein MAVS, thereby disrupting activation of IRF3 through the IFIH1/MDA5 pathway. In vivo, the protease activity of 3ABC precursor is more efficient in cleaving the 2BC precursor than that of protein 3C. The 3ABC precursor may therefore play a role in the proteolytic processing of the polyprotein. Its function is as follows. Interacts with the 3CD precursor and with RNA structures found at both the 5'- and 3'-termini of the viral genome. Since the 3AB precursor contains the hydrophobic domain 3A, it probably anchors the whole viral replicase complex to intracellular membranes on which viral RNA synthesis occurs. May serve as membrane anchor to the 3AB and 3ABC precursors via its hydrophobic domain. May interact with RNA. In terms of biological role, acts as a primer for viral RNA replication and remains covalently bound to viral genomic RNA. VPg is uridylylated prior to priming replication into VPg-pUpU. The VPg-pUpU is then used as primer on the genomic RNA poly(A) by the RNA-dependent RNA polymerase to replicate the viral genome. Functionally, cysteine protease that generates mature viral proteins from the precursor polyprotein. In addition to its proteolytic activity, it binds to viral RNA, and thus influences viral genome replication. RNA and substrate bind cooperatively to the protease. Cleaves IKBKG/NEMO to impair innate immune signaling. Cleaves host PABPC1 which may participate in the switch of viral translation to RNA synthesis. Its function is as follows. Interacts with the 3AB precursor and with RNA structures found at both the 5'- and 3'-termini of the viral genome. Disrupts TLR3 signaling by degrading the host adapter protein TICAM1/TRIF. RNA-directed RNA polymerase 3D-POL replicates genomic and antigenomic RNA by recognizing replications specific signals. The protein is Genome polyprotein of Human hepatitis A virus genotype IB (isolate HM175) (HHAV).